The following is a 483-amino-acid chain: V-type proton ATPase subunit H (483 aa).

Phosphoserine occurs at positions 59 and 483.

This sequence belongs to the V-ATPase H subunit family. In terms of assembly, V-ATPase is a heteromultimeric enzyme made up of two complexes: the ATP-hydrolytic V1 complex and the proton translocation V0 complex. The V1 complex consists of three catalytic AB heterodimers that form a heterohexamer, three peripheral stalks each consisting of EG heterodimers, one central rotor including subunits D and F, and the regulatory subunits C and H. The proton translocation complex V0 consists of the proton transport subunit a, a ring of proteolipid subunits c9c'', rotary subunit d, subunits e and f, and the accessory subunits ATP6AP1/Ac45 and ATP6AP2/PRR. Interacts with AP2M1.

The protein resides in the cytoplasmic vesicle. Its subcellular location is the clathrin-coated vesicle membrane. Its function is as follows. Subunit of the V1 complex of vacuolar(H+)-ATPase (V-ATPase), a multisubunit enzyme composed of a peripheral complex (V1) that hydrolyzes ATP and a membrane integral complex (V0) that translocates protons. V-ATPase is responsible for acidifying and maintaining the pH of intracellular compartments and in some cell types, is targeted to the plasma membrane, where it is responsible for acidifying the extracellular environment. Subunit H is essential for V-ATPase activity, but not for the assembly of the complex. Involved in the endocytosis mediated by clathrin-coated pits, required for the formation of endosomes. This Mus musculus (Mouse) protein is V-type proton ATPase subunit H (Atp6v1h).